The chain runs to 293 residues: Nitrogenase iron protein (293 aa).

10-17 (GKGGIGKS) is an ATP binding site. Cysteine 98 contributes to the [4Fe-4S] cluster binding site. Arginine 101 is modified (ADP-ribosylarginine; by dinitrogenase reductase ADP-ribosyltransferase). [4Fe-4S] cluster is bound at residue cysteine 133.

The protein belongs to the NifH/BchL/ChlL family. Homodimer. [4Fe-4S] cluster serves as cofactor. The reversible ADP-ribosylation of Arg-101 inactivates the nitrogenase reductase and regulates nitrogenase activity.

It catalyses the reaction N2 + 8 reduced [2Fe-2S]-[ferredoxin] + 16 ATP + 16 H2O = H2 + 8 oxidized [2Fe-2S]-[ferredoxin] + 2 NH4(+) + 16 ADP + 16 phosphate + 6 H(+). Its function is as follows. The key enzymatic reactions in nitrogen fixation are catalyzed by the nitrogenase complex, which has 2 components: the iron protein and the molybdenum-iron protein. The polypeptide is Nitrogenase iron protein (Pectobacterium atrosepticum (strain SCRI 1043 / ATCC BAA-672) (Erwinia carotovora subsp. atroseptica)).